A 448-amino-acid chain; its full sequence is MTLPAFKAYDIRGRVPDELNEDLARRIGVALAAQLDQGPVVLGHDVRLASPALQEALSAGLRASGREVIDIGLCGTEEVYFQTDHLKAAGGVMVTASHNPMDYNGMKLVREQARPISSDTGLFAIRDTVAADTAAAGEPTAAEHSRTDKTAYLEHLLSYVDRSTLKPLKLVVNAGNGGAGLIVDLLAPHLPFEFVRVFHEPDGNFPNGIPNPLLQENRDATAKAVKEHGADFGIAWDGDFDRCFFFDHTGRFIEGYYLVGLLAQAILAKQPGGKVVHDPRLTWNTVEMVEDAGGIPVLCKSGHAFIKEKMRSENAVYGGEMSAHHYFREFAYADSGMIPWLLIAELVSQSGRSLADLVEARMQKFPCSGEINFKVDDAKAAVARVMAHYGDQSPELDYTDGISADFGQWRFNLRSSNTEPLLRLNVETRGDAALLETRTQEISNLLRG.

S97 acts as the Phosphoserine intermediate in catalysis. 4 residues coordinate Mg(2+): S97, D237, D239, and D241.

The protein belongs to the phosphohexose mutase family. Mg(2+) serves as cofactor.

The enzyme catalyses alpha-D-glucose 1-phosphate = alpha-D-glucose 6-phosphate. The catalysed reaction is alpha-D-mannose 1-phosphate = D-mannose 6-phosphate. The protein operates within nucleotide-sugar biosynthesis; GDP-alpha-D-mannose biosynthesis; alpha-D-mannose 1-phosphate from D-fructose 6-phosphate: step 2/2. In terms of biological role, involved in xanthan production. In Xanthomonas campestris pv. campestris (strain B100), this protein is Phosphohexose mutases (xanA).